The following is a 180-amino-acid chain: Small ribosomal subunit protein bS18 (180 aa).

Disordered regions lie at residues 1–26 and 53–82; these read MKNKLKKKKNPKGTKKIKAKAKAHKV and YSDKESYSDKESYSDKESYSDKESYSDKES.

Belongs to the bacterial ribosomal protein bS18 family. As to quaternary structure, part of the 30S ribosomal subunit. Forms a tight heterodimer with protein bS6.

Binds as a heterodimer with protein bS6 to the central domain of the 16S rRNA, where it helps stabilize the platform of the 30S subunit. The chain is Small ribosomal subunit protein bS18 from Karelsulcia muelleri (strain GWSS) (Sulcia muelleri).